We begin with the raw amino-acid sequence, 131 residues long: Small ribosomal subunit protein uS8 (131 aa).

The protein belongs to the universal ribosomal protein uS8 family. In terms of assembly, part of the 30S ribosomal subunit. Contacts proteins S5 and S12.

Functionally, one of the primary rRNA binding proteins, it binds directly to 16S rRNA central domain where it helps coordinate assembly of the platform of the 30S subunit. The chain is Small ribosomal subunit protein uS8 from Vesicomyosocius okutanii subsp. Calyptogena okutanii (strain HA).